Consider the following 431-residue polypeptide: UDP-N-acetylmuramate--L-alanine ligase (431 aa).

G108–T114 contributes to the ATP binding site.

This sequence belongs to the MurCDEF family.

It localises to the cytoplasm. It catalyses the reaction UDP-N-acetyl-alpha-D-muramate + L-alanine + ATP = UDP-N-acetyl-alpha-D-muramoyl-L-alanine + ADP + phosphate + H(+). It participates in cell wall biogenesis; peptidoglycan biosynthesis. Functionally, cell wall formation. This Campylobacter jejuni subsp. jejuni serotype O:23/36 (strain 81-176) protein is UDP-N-acetylmuramate--L-alanine ligase.